Consider the following 441-residue polypeptide: Protein C-ets-1 (441 aa).

Residues Lys8 and Lys15 each carry the N6-acetyllysine; alternate modification. Residues Lys8 and Lys15 each participate in a glycyl lysine isopeptide (Lys-Gly) (interchain with G-Cter in SUMO2); alternate cross-link. Thr38 is subject to Phosphothreonine; by MAPK. The 86-residue stretch at 51–136 (ATFSGFTKEQ…EHLEILQKED (86 aa)) folds into the PNT domain. The interval 130–243 (EILQKEDVKP…DNMCMGRTSR (114 aa)) is activation domain; required for transcription activation. Residue Lys138 forms a Glycyl lysine isopeptide (Lys-Gly) (interchain with G-Cter in SUMO2) linkage. Tyr223 carries the post-translational modification Phosphotyrosine. Residue Lys227 forms a Glycyl lysine isopeptide (Lys-Gly) (interchain with G-Cter in SUMO) linkage. 2 positions are modified to phosphoserine: Ser251 and Ser254. Thr265 carries the post-translational modification Phosphothreonine. Phosphoserine is present on residues Ser267, Ser270, Ser282, and Ser285. The segment at 304–312 (FKDYVRDRA) is helix HI-1. Lys305 carries the post-translational modification N6-acetyllysine. The interval 323–330 (AAALAGYT) is helix HI-2. The ETS DNA-binding region spans 335–415 (IQLWQFLLEL…AGKRYVYRFV (81 aa)). Residues 418–422 (LQSLL) are helix H4. The segment at 426–432 (PEELHAM) is helix H5.

This sequence belongs to the ETS family. As to quaternary structure, binds DNA as a homodimer; homodimerization is required for transcription activation. Interacts with MAF and MAFB. Interacts with PAX5; the interaction alters DNA-binding properties. Interacts with DAXX. Interacts with UBE2I. Interacts with SP100; the interaction is direct and modulates ETS1 transcriptional activity. Sumoylated on Lys-15 and Lys-227, preferentially with SUMO2; which inhibits transcriptional activity. Post-translationally, ubiquitinated; which induces proteasomal degradation. In terms of processing, phosphorylation at Ser-251, Ser-282 and Ser-285 by CaMK2/CaMKII in response to calcium signaling decreases affinity for DNA: an increasing number of phosphoserines causes DNA-binding to become progressively weaker. In terms of tissue distribution, highly expressed within lymphoid cells. Isoforms c-ETS-1A and Ets-1 p27 are both detected in all fetal tissues tested, but vary with tissue type in adult tissues. None is detected in brain or kidney.

It localises to the nucleus. Its subcellular location is the cytoplasm. Its activity is regulated as follows. Autoinhibited by a module composed of four alpha helices (HI-1, HI-2, H4, and H5) that flank the DNA-binding ETS domain, reducing the affinity for DNA. Phosphorylation by CaMK2/CaMKII in response to calcium signaling decreases affinity for DNA. Transcription factor. Directly controls the expression of cytokine and chemokine genes in a wide variety of different cellular contexts. May control the differentiation, survival and proliferation of lymphoid cells. May also regulate angiogenesis through regulation of expression of genes controlling endothelial cell migration and invasion. Its function is as follows. Acts as a dominant-negative for isoform c-ETS-1A. The chain is Protein C-ets-1 (ETS1) from Homo sapiens (Human).